The primary structure comprises 473 residues: Photosystem II CP43 reaction center protein (473 aa).

Positions 1 to 14 are excised as a propeptide; sequence MKTLYSPRRFYPVE. T15 carries the post-translational modification N-acetylthreonine. T15 carries the post-translational modification Phosphothreonine. The next 5 helical transmembrane spans lie at 69 to 93, 134 to 155, 178 to 200, 255 to 275, and 291 to 312; these read LFEV…PHLA, LIGP…KDRN, KALF…RKIT, KPFA…LSYS, and WFNN…ASQA. Position 367 (E367) interacts with [CaMn4O5] cluster. The helical transmembrane segment at 447 to 471 threads the bilayer; that stretch reads RARAAAAGFEKGIDRDLEPVLFMTP.

The protein belongs to the PsbB/PsbC family. PsbC subfamily. As to quaternary structure, PSII is composed of 1 copy each of membrane proteins PsbA, PsbB, PsbC, PsbD, PsbE, PsbF, PsbH, PsbI, PsbJ, PsbK, PsbL, PsbM, PsbT, PsbX, PsbY, PsbZ, Psb30/Ycf12, at least 3 peripheral proteins of the oxygen-evolving complex and a large number of cofactors. It forms dimeric complexes. Requires Binds multiple chlorophylls and provides some of the ligands for the Ca-4Mn-5O cluster of the oxygen-evolving complex. It may also provide a ligand for a Cl- that is required for oxygen evolution. PSII binds additional chlorophylls, carotenoids and specific lipids. as cofactor.

The protein localises to the plastid. Its subcellular location is the chloroplast thylakoid membrane. In terms of biological role, one of the components of the core complex of photosystem II (PSII). It binds chlorophyll and helps catalyze the primary light-induced photochemical processes of PSII. PSII is a light-driven water:plastoquinone oxidoreductase, using light energy to abstract electrons from H(2)O, generating O(2) and a proton gradient subsequently used for ATP formation. The chain is Photosystem II CP43 reaction center protein from Gnetum parvifolium (Small-leaved jointfir).